The chain runs to 208 residues: uncharacterized protein (208 aa).

3 disordered regions span residues 91–115, 127–156, and 182–208; these read PGQAGSQEAADGKGRLPDITSPSQD, QSWSSGTSRPTCLAYRPRHLSPSSKPKRPG, and NKLGSSDDSDTDRFSSVTSGSSRRKFK. Over residues 127–136 the composition is skewed to polar residues; sequence QSWSSGTSRP.

This is an uncharacterized protein from Rattus norvegicus (Rat).